Here is a 274-residue protein sequence, read N- to C-terminus: Purine nucleoside phosphorylase 1 (274 aa).

Phosphate-binding positions include S29, H60, 80–82 (RFH), and A112. S29 carries the post-translational modification Phosphoserine. E192 serves as a coordination point for a purine D-ribonucleoside. S211 provides a ligand contact to phosphate. N234 serves as a coordination point for a purine D-ribonucleoside.

It belongs to the PNP/MTAP phosphorylase family. As to quaternary structure, homotrimer.

It carries out the reaction a purine D-ribonucleoside + phosphate = a purine nucleobase + alpha-D-ribose 1-phosphate. The enzyme catalyses a purine 2'-deoxy-D-ribonucleoside + phosphate = a purine nucleobase + 2-deoxy-alpha-D-ribose 1-phosphate. The protein operates within purine metabolism; purine nucleoside salvage. In terms of biological role, the purine nucleoside phosphorylases catalyze the phosphorolytic breakdown of the N-glycosidic bond in the beta-(deoxy)ribonucleoside molecules, with the formation of the corresponding free purine bases and pentose-1-phosphate. Cleaves guanosine, inosine, 2'-deoxyguanosine and 2'-deoxyinosine. In Geobacillus stearothermophilus (Bacillus stearothermophilus), this protein is Purine nucleoside phosphorylase 1 (punA).